The chain runs to 955 residues: Centrosomal protein of 112 kDa (955 aa).

Residues 277 to 954 (QKHDADVQKI…QEELTTYQGR (678 aa)) are a coiled coil.

Its subcellular location is the cytoplasm. It localises to the cytoskeleton. It is found in the microtubule organizing center. The protein resides in the centrosome. This Homo sapiens (Human) protein is Centrosomal protein of 112 kDa (CEP112).